A 302-amino-acid polypeptide reads, in one-letter code: ATP synthase gamma chain (302 aa).

It belongs to the ATPase gamma chain family. F-type ATPases have 2 components, CF(1) - the catalytic core - and CF(0) - the membrane proton channel. CF(1) has five subunits: alpha(3), beta(3), gamma(1), delta(1), epsilon(1). CF(0) has three main subunits: a, b and c.

The protein resides in the cell inner membrane. Produces ATP from ADP in the presence of a proton gradient across the membrane. The gamma chain is believed to be important in regulating ATPase activity and the flow of protons through the CF(0) complex. The sequence is that of ATP synthase gamma chain from Bartonella bacilliformis (strain ATCC 35685 / KC583 / Herrer 020/F12,63).